The primary structure comprises 359 residues: Archaemetzincin-2 (359 aa).

A Zn(2+)-binding site is contributed by histidine 254. Glutamate 255 (proton acceptor) is an active-site residue. Positions 258, 264, 265, 270, 289, and 292 each coordinate Zn(2+).

This sequence belongs to the peptidase M54 family. Zn(2+) serves as cofactor.

In terms of biological role, probable zinc metalloprotease. The chain is Archaemetzincin-2 (Amz2) from Rattus norvegicus (Rat).